We begin with the raw amino-acid sequence, 323 residues long: Acetyl-coenzyme A carboxylase carboxyl transferase subunit alpha (323 aa).

The 255-residue stretch at 39–293 (RLAGKSQQLT…KRSLAESLRQ (255 aa)) folds into the CoA carboxyltransferase C-terminal domain.

The protein belongs to the AccA family. As to quaternary structure, acetyl-CoA carboxylase is a heterohexamer composed of biotin carboxyl carrier protein (AccB), biotin carboxylase (AccC) and two subunits each of ACCase subunit alpha (AccA) and ACCase subunit beta (AccD).

The protein localises to the cytoplasm. It catalyses the reaction N(6)-carboxybiotinyl-L-lysyl-[protein] + acetyl-CoA = N(6)-biotinyl-L-lysyl-[protein] + malonyl-CoA. The protein operates within lipid metabolism; malonyl-CoA biosynthesis; malonyl-CoA from acetyl-CoA: step 1/1. Functionally, component of the acetyl coenzyme A carboxylase (ACC) complex. First, biotin carboxylase catalyzes the carboxylation of biotin on its carrier protein (BCCP) and then the CO(2) group is transferred by the carboxyltransferase to acetyl-CoA to form malonyl-CoA. In Cupriavidus metallidurans (strain ATCC 43123 / DSM 2839 / NBRC 102507 / CH34) (Ralstonia metallidurans), this protein is Acetyl-coenzyme A carboxylase carboxyl transferase subunit alpha.